A 287-amino-acid chain; its full sequence is Formamidopyrimidine-DNA glycosylase (287 aa).

Proline 2 serves as the catalytic Schiff-base intermediate with DNA. Glutamate 3 functions as the Proton donor in the catalytic mechanism. Lysine 58 acts as the Proton donor; for beta-elimination activity in catalysis. 3 residues coordinate DNA: histidine 104, arginine 123, and arginine 166. The FPG-type zinc finger occupies 251-287; that stretch reads RVYDREGQPCPTPGCKGMIGREVQAGRSTFFCPVCQV. The active-site Proton donor; for delta-elimination activity is arginine 277.

Belongs to the FPG family. As to quaternary structure, monomer. Zn(2+) serves as cofactor.

The enzyme catalyses Hydrolysis of DNA containing ring-opened 7-methylguanine residues, releasing 2,6-diamino-4-hydroxy-5-(N-methyl)formamidopyrimidine.. The catalysed reaction is 2'-deoxyribonucleotide-(2'-deoxyribose 5'-phosphate)-2'-deoxyribonucleotide-DNA = a 3'-end 2'-deoxyribonucleotide-(2,3-dehydro-2,3-deoxyribose 5'-phosphate)-DNA + a 5'-end 5'-phospho-2'-deoxyribonucleoside-DNA + H(+). Involved in base excision repair of DNA damaged by oxidation or by mutagenic agents. Acts as a DNA glycosylase that recognizes and removes damaged bases. Has a preference for oxidized purines, such as 7,8-dihydro-8-oxoguanine (8-oxoG). Has AP (apurinic/apyrimidinic) lyase activity and introduces nicks in the DNA strand. Cleaves the DNA backbone by beta-delta elimination to generate a single-strand break at the site of the removed base with both 3'- and 5'-phosphates. The protein is Formamidopyrimidine-DNA glycosylase of Caulobacter sp. (strain K31).